The chain runs to 230 residues: 8-demethylnovobiocic acid C(8)-methyltransferase (230 aa).

The protein belongs to the methyltransferase superfamily.

It carries out the reaction 8-desmethylnovobiocic acid + S-adenosyl-L-methionine = novobiocic acid + S-adenosyl-L-homocysteine + H(+). It functions in the pathway antibiotic biosynthesis; novobiocin biosynthesis. Its function is as follows. C-methyltransferase that methylates 8-demethylnovobiocic acid to produce novobiocic acid in the novobiocin biosynthesis pathway. Novobiocin is an aminocoumarin family antibiotic that targets bacterial DNA gyrases. The protein is 8-demethylnovobiocic acid C(8)-methyltransferase (novO) of Streptomyces niveus (Streptomyces spheroides).